The primary structure comprises 398 residues: Glycerol-3-phosphate dehydrogenase [NAD(+)] 1 (398 aa).

NAD(+) contacts are provided by residues 50-55 (GSGNWG), Phe138, Lys161, and Ala194. Lys161 is a substrate binding site. The active-site Proton acceptor is Lys253. The NAD(+) site is built by Arg318 and Gln350. 318–319 (RN) provides a ligand contact to substrate.

The protein belongs to the NAD-dependent glycerol-3-phosphate dehydrogenase family.

The protein localises to the cytoplasm. It carries out the reaction sn-glycerol 3-phosphate + NAD(+) = dihydroxyacetone phosphate + NADH + H(+). The sequence is that of Glycerol-3-phosphate dehydrogenase [NAD(+)] 1 (GPD1) from Yarrowia lipolytica (strain CLIB 122 / E 150) (Yeast).